A 264-amino-acid polypeptide reads, in one-letter code: Thymidylate synthase (264 aa).

Arginine 21 serves as a coordination point for dUMP. Histidine 51 provides a ligand contact to (6R)-5,10-methylene-5,6,7,8-tetrahydrofolate. 126-127 (RR) contributes to the dUMP binding site. The Nucleophile role is filled by cysteine 146. DUMP is bound by residues 166-169 (RSAD), asparagine 177, and 207-209 (HLY). Aspartate 169 lines the (6R)-5,10-methylene-5,6,7,8-tetrahydrofolate pocket. A (6R)-5,10-methylene-5,6,7,8-tetrahydrofolate-binding site is contributed by alanine 263.

The protein belongs to the thymidylate synthase family. Bacterial-type ThyA subfamily. Homodimer.

It is found in the cytoplasm. It catalyses the reaction dUMP + (6R)-5,10-methylene-5,6,7,8-tetrahydrofolate = 7,8-dihydrofolate + dTMP. It participates in pyrimidine metabolism; dTTP biosynthesis. Its function is as follows. Catalyzes the reductive methylation of 2'-deoxyuridine-5'-monophosphate (dUMP) to 2'-deoxythymidine-5'-monophosphate (dTMP) while utilizing 5,10-methylenetetrahydrofolate (mTHF) as the methyl donor and reductant in the reaction, yielding dihydrofolate (DHF) as a by-product. This enzymatic reaction provides an intracellular de novo source of dTMP, an essential precursor for DNA biosynthesis. This is Thymidylate synthase from Alkalilimnicola ehrlichii (strain ATCC BAA-1101 / DSM 17681 / MLHE-1).